The following is a 204-amino-acid chain: Leucyl/phenylalanyl-tRNA--protein transferase (204 aa).

This sequence belongs to the L/F-transferase family.

The protein localises to the cytoplasm. The catalysed reaction is N-terminal L-lysyl-[protein] + L-leucyl-tRNA(Leu) = N-terminal L-leucyl-L-lysyl-[protein] + tRNA(Leu) + H(+). It catalyses the reaction N-terminal L-arginyl-[protein] + L-leucyl-tRNA(Leu) = N-terminal L-leucyl-L-arginyl-[protein] + tRNA(Leu) + H(+). The enzyme catalyses L-phenylalanyl-tRNA(Phe) + an N-terminal L-alpha-aminoacyl-[protein] = an N-terminal L-phenylalanyl-L-alpha-aminoacyl-[protein] + tRNA(Phe). Its function is as follows. Functions in the N-end rule pathway of protein degradation where it conjugates Leu, Phe and, less efficiently, Met from aminoacyl-tRNAs to the N-termini of proteins containing an N-terminal arginine or lysine. This Rhizobium etli (strain CIAT 652) protein is Leucyl/phenylalanyl-tRNA--protein transferase.